The chain runs to 1304 residues: Probable inactive serine/threonine-protein kinase fnkC (1304 aa).

Positions 33–402 (FEIIRILKKD…TNLLLTHKFI (370 aa)) constitute a Protein kinase domain. Residues 39–47 (LKKDEFSTT) and lysine 68 contribute to the ATP site. The interval 208-277 (KDNNNNNNNN…EAEGGGGGGE (70 aa)) is disordered. Positions 210 to 269 (NNNNNNNNNNNNNNNNNNNNNNNNNNNNNNANNSNNNTLNNLSIVNNNSSSSSNDNSSEA) are enriched in low complexity. FNIP repeat units follow at residues 514 to 556 (HSKS…LGSD), 710 to 753 (FNQL…FGRC), 754 to 797 (FNQP…FGSQ), 798 to 841 (YNQP…FGES), and 900 to 943 (YNDI…FGCD). MATH domains follow at residues 1025–1154 (QGSW…RIDA) and 1172–1291 (NQAF…NVSI).

This sequence belongs to the protein kinase superfamily. STE Ser/Thr protein kinase family.

This chain is Probable inactive serine/threonine-protein kinase fnkC (fnkC), found in Dictyostelium discoideum (Social amoeba).